A 508-amino-acid chain; its full sequence is Mitochondrial distribution and morphology protein 10 (508 aa).

Positions Pro-160–Asn-195 are disordered.

Belongs to the MDM10 family. Component of the ER-mitochondria encounter structure (ERMES) or MDM complex, composed of MMM1, MDM10, MDM12 and MDM34. Associates with the mitochondrial outer membrane sorting assembly machinery SAM(core) complex.

The protein localises to the mitochondrion outer membrane. Its function is as follows. Component of the ERMES/MDM complex, which serves as a molecular tether to connect the endoplasmic reticulum and mitochondria. Components of this complex are involved in the control of mitochondrial shape and protein biogenesis and may function in phospholipid exchange. MDM10 is involved in the late assembly steps of the general translocase of the mitochondrial outer membrane (TOM complex). Functions in the TOM40-specific route of the assembly of outer membrane beta-barrel proteins, including the association of TOM40 with the receptor TOM22 and small TOM proteins. Can associate with the SAM(core) complex as well as the MDM12-MMM1 complex, both involved in late steps of the major beta-barrel assembly pathway, that is responsible for biogenesis of all outer membrane beta-barrel proteins. May act as a switch that shuttles between both complexes and channels precursor proteins into the TOM40-specific pathway. Plays a role in mitochondrial morphology and in the inheritance of mitochondria. This is Mitochondrial distribution and morphology protein 10 from Cryptococcus neoformans var. neoformans serotype D (strain B-3501A) (Filobasidiella neoformans).